The primary structure comprises 718 residues: Receptor-like protein 36 (718 aa).

A signal peptide spans 1–26 (MIRSLSYCFLTIYFFLSILPLPNTIA). Topologically, residues 27-695 (CPTRLLCRSD…SESEDQLLNW (669 aa)) are extracellular. LRR repeat units lie at residues 70–94 (DAIL…IGNL), 95–118 (SHLT…IGNL), 120–141 (QLES…SFAN), 143–165 (TKLS…LANL), 166–188 (TSLS…DLSG), 189–213 (LHNL…LLMI), 214–238 (PSLV…TFSL), 239–261 (SRLR…SISK), 262–286 (LVNL…ISKV), 288–310 (NLTS…VWRS), 312–334 (KLDY…EVID), 335–359 (GASL…ICKV), 360–383 (KDLY…LKYS), 384–406 (TYFH…LFIK), 407–431 (DSQL…LINC), 433–454 (RIEF…WLGS), 455–480 (LPYL…AYLG), and 481–505 (FPSI…YFAN). N-linked (GlcNAc...) asparagine glycosylation is present at asparagine 93. 2 N-linked (GlcNAc...) asparagine glycosylation sites follow: asparagine 141 and asparagine 164. N-linked (GlcNAc...) asparagine glycosylation occurs at asparagine 199. An N-linked (GlcNAc...) asparagine glycan is attached at asparagine 288. N-linked (GlcNAc...) asparagine glycosylation is found at asparagine 373 and asparagine 393. An N-linked (GlcNAc...) asparagine glycan is attached at asparagine 528. LRR repeat units follow at residues 550–574 (FEGF…IGLL), 575–598 (SELR…LANI), 599–622 (TNLE…LGKL), and 624–647 (FLSN…QFAT). N-linked (GlcNAc...) asparagine glycans are attached at residues asparagine 581, asparagine 597, asparagine 610, asparagine 629, and asparagine 649. Residues 696-716 (IAAAIAFGPGMFCGLVIGHIF) form a helical membrane-spanning segment. Residues 717 to 718 (TS) lie on the Cytoplasmic side of the membrane.

Belongs to the RLP family.

It localises to the cell membrane. The sequence is that of Receptor-like protein 36 from Arabidopsis thaliana (Mouse-ear cress).